Reading from the N-terminus, the 244-residue chain is Triosephosphate isomerase (244 aa).

9–11 provides a ligand contact to substrate; it reads NWK. The active-site Electrophile is the His93. The Proton acceptor role is filled by Glu161. Residues Gly167, Ser206, and 227–228 contribute to the substrate site; that span reads GG.

This sequence belongs to the triosephosphate isomerase family. In terms of assembly, homodimer.

The protein resides in the cytoplasm. It carries out the reaction D-glyceraldehyde 3-phosphate = dihydroxyacetone phosphate. It participates in carbohydrate biosynthesis; gluconeogenesis. The protein operates within carbohydrate degradation; glycolysis; D-glyceraldehyde 3-phosphate from glycerone phosphate: step 1/1. In terms of biological role, involved in the gluconeogenesis. Catalyzes stereospecifically the conversion of dihydroxyacetone phosphate (DHAP) to D-glyceraldehyde-3-phosphate (G3P). This is Triosephosphate isomerase from Deinococcus geothermalis (strain DSM 11300 / CIP 105573 / AG-3a).